A 144-amino-acid polypeptide reads, in one-letter code: uncharacterized protein (144 aa).

4 consecutive transmembrane segments (helical) span residues 7–29, 51–73, 85–107, and 122–139; these read FPASVLQIALALFLLASGARDLV, VAIGVLTLAVSLCCLTAGFFLLV, AVLALFVVLWALNMVLVDVVGAF, and HLHHTAVDLLVLGALIFV.

The protein localises to the cell membrane. This is an uncharacterized protein from Treponema pallidum (strain Nichols).